The following is a 125-amino-acid chain: Ribosome maturation factor RimP (125 aa).

This sequence belongs to the RimP family.

The protein resides in the cytoplasm. In terms of biological role, required for maturation of 30S ribosomal subunits. The protein is Ribosome maturation factor RimP of Rickettsia canadensis (strain McKiel).